The following is a 437-amino-acid chain: 26S proteasome regulatory subunit 4 homolog (437 aa).

Residues 1-47 (MGQGVSSGQDKKKKKGSNQKPKYEPPVQSKFGRKKRKGGPATAEKLP) are disordered. Gly-2 is lipidated: N-myristoyl glycine. 223 to 230 (GAPGTGKT) contributes to the ATP binding site. Residues Lys-234, Lys-255, and Lys-290 each participate in a glycyl lysine isopeptide (Lys-Gly) (interchain with G-Cter in ubiquitin) cross-link.

It belongs to the AAA ATPase family.

It localises to the cytoplasm. It is found in the nucleus. Its function is as follows. The 26S proteasome is involved in the ATP-dependent degradation of ubiquitinated proteins. The regulatory (or ATPase) complex confers ATP dependency and substrate specificity to the 26S complex. Has ATPase activity. The chain is 26S proteasome regulatory subunit 4 homolog (RPT2) from Saccharomyces cerevisiae (strain ATCC 204508 / S288c) (Baker's yeast).